The following is a 141-amino-acid chain: Hemoglobin subunit alpha-D (141 aa).

The region spanning 1–141 is the Globin domain; that stretch reads MLNAEDKKLI…VSAVLAEKYR (141 aa). 2 residues coordinate heme b: histidine 58 and histidine 87.

It belongs to the globin family. Heterotetramer of two alpha-D chains and two beta chains. In terms of tissue distribution, red blood cells.

Involved in oxygen transport from the lung to the various peripheral tissues. The chain is Hemoglobin subunit alpha-D (HBAD) from Phasianus colchicus colchicus (Black-necked pheasant).